Reading from the N-terminus, the 422-residue chain is MDFLEIVGQVPLKGGVEISGAKNSALPILAATLLSQQEVKIKSLPQVVDIKAMALLLQNLGAELEWLDPNTLQIGAKSLHHTEATYDLVRKMRASILVLGPLLARFKECLVSLPGGCAIGARPVDLHLKAMQQLGAEIKIEQGYIHAKASKGLKGNDILFDKISVTGTENALMAASLAKGITRIINAAKEPEIAQLCTFLQSGGVEIEGVGSSELKIRGVENDALNLKDIQIIPDRIEAGTYLCVGAITNSQLKIHRIIPNHLQAITDKLIEIGFSLDIQENSIEIYPAKKRQAFEITTKEYPGFPTDMQAQFMALATQCLGTSVIEETLFENRFMHASELQRLGANISLKTNVATISGSTELTGSDVMATDLRASSALILAALVAKGVSRVHRIYHLDRGYERLEDKINALGAKVLRLKEK.

22–23 is a phosphoenolpyruvate binding site; the sequence is KN. Arg-93 is a binding site for UDP-N-acetyl-alpha-D-glucosamine. Cys-117 (proton donor) is an active-site residue. The residue at position 117 (Cys-117) is a 2-(S-cysteinyl)pyruvic acid O-phosphothioketal. UDP-N-acetyl-alpha-D-glucosamine-binding positions include 122 to 126, Asp-308, and Leu-330; that span reads RPVDL.

The protein belongs to the EPSP synthase family. MurA subfamily.

It localises to the cytoplasm. The catalysed reaction is phosphoenolpyruvate + UDP-N-acetyl-alpha-D-glucosamine = UDP-N-acetyl-3-O-(1-carboxyvinyl)-alpha-D-glucosamine + phosphate. It functions in the pathway cell wall biogenesis; peptidoglycan biosynthesis. In terms of biological role, cell wall formation. Adds enolpyruvyl to UDP-N-acetylglucosamine. This is UDP-N-acetylglucosamine 1-carboxyvinyltransferase from Helicobacter pylori (strain P12).